The chain runs to 40 residues: MIRVFIGSLPMLDLKNRVSSYWHFSSTPVARRITDHTCLM.

This is an uncharacterized protein from Saccharomyces cerevisiae (strain ATCC 204508 / S288c) (Baker's yeast).